A 1114-amino-acid chain; its full sequence is Transcriptional repressor NF-X1 (1114 aa).

The interval G9–K26 is interaction with PABPC1 and PABC4. 3 disordered regions span residues F20 to P220, Q232 to S287, and K299 to G325. Phosphoserine occurs at positions 50, 81, 92, 126, 130, and 147. Polar residues-rich tracts occupy residues S72–W103 and L121–N142. Composition is skewed to basic and acidic residues over residues P143 to V156, L185 to T202, Q232 to R248, and V304 to D315. Residue S320 is modified to Phosphoserine. The RING-type; atypical zinc finger occupies C352–Q403. 8 NF-X1-type zinc fingers span residues C447–A465, C500–I519, C561–R580, C626–R649, C688–L707, C715–Q734, C826–Q848, and C857–A878. The 69-residue stretch at L988–R1056 folds into the R3H domain. The tract at residues E1071 to S1095 is disordered.

The protein belongs to the NFX1 family. In terms of assembly, interacts with PABPC1 and PABPC4. Ubiquitously expressed, with highest levels in thymus.

Its subcellular location is the nucleus. Its function is as follows. Binds to the X-box motif of MHC class II genes and represses their expression. May play an important role in regulating the duration of an inflammatory response by limiting the period in which MHC class II molecules are induced by interferon-gamma. Together with PABPC1 or PABPC4, acts as a coactivator for TERT expression. Mediates E2-dependent ubiquitination. In Mus musculus (Mouse), this protein is Transcriptional repressor NF-X1 (Nfx1).